We begin with the raw amino-acid sequence, 350 residues long: Ketol-acid reductoisomerase (NADP(+)) (350 aa).

In terms of domain architecture, KARI N-terminal Rossmann spans 3 to 183; that stretch reads AQIWYEDDGD…GALRAGAIKT (181 aa). Residues 26 to 29, arginine 49, serine 52, serine 54, and 84 to 87 each bind NADP(+); these read YGSQ and DQYQ. Residue histidine 109 is part of the active site. Glycine 135 contacts NADP(+). The KARI C-terminal knotted domain occupies 184–327; it reads TFKEETETDL…PKLRAMFSWN (144 aa). Mg(2+) is bound by residues aspartate 192, glutamate 196, glutamate 228, and glutamate 232. Residue serine 253 coordinates substrate.

This sequence belongs to the ketol-acid reductoisomerase family. The cofactor is Mg(2+).

The catalysed reaction is (2R)-2,3-dihydroxy-3-methylbutanoate + NADP(+) = (2S)-2-acetolactate + NADPH + H(+). The enzyme catalyses (2R,3R)-2,3-dihydroxy-3-methylpentanoate + NADP(+) = (S)-2-ethyl-2-hydroxy-3-oxobutanoate + NADPH + H(+). It functions in the pathway amino-acid biosynthesis; L-isoleucine biosynthesis; L-isoleucine from 2-oxobutanoate: step 2/4. The protein operates within amino-acid biosynthesis; L-valine biosynthesis; L-valine from pyruvate: step 2/4. Functionally, involved in the biosynthesis of branched-chain amino acids (BCAA). Catalyzes an alkyl-migration followed by a ketol-acid reduction of (S)-2-acetolactate (S2AL) to yield (R)-2,3-dihydroxy-isovalerate. In the isomerase reaction, S2AL is rearranged via a Mg-dependent methyl migration to produce 3-hydroxy-3-methyl-2-ketobutyrate (HMKB). In the reductase reaction, this 2-ketoacid undergoes a metal-dependent reduction by NADPH to yield (R)-2,3-dihydroxy-isovalerate. This Bifidobacterium animalis subsp. lactis (strain AD011) protein is Ketol-acid reductoisomerase (NADP(+)).